Reading from the N-terminus, the 74-residue chain is UPF0352 protein HAPS_0210 (74 aa).

The protein belongs to the UPF0352 family.

This chain is UPF0352 protein HAPS_0210, found in Glaesserella parasuis serovar 5 (strain SH0165) (Haemophilus parasuis).